Reading from the N-terminus, the 51-residue chain is Large ribosomal subunit protein bL33 (51 aa).

Positions 1–24 (MREKIRLNSSAGTGHFYTTDKNKR) are disordered.

Belongs to the bacterial ribosomal protein bL33 family.

The protein is Large ribosomal subunit protein bL33 of Cellvibrio japonicus (strain Ueda107) (Pseudomonas fluorescens subsp. cellulosa).